A 783-amino-acid chain; its full sequence is Lon protease (783 aa).

Residues 11-203 form the Lon N-terminal domain; that stretch reads IPVLPLRDVV…FLMGQMESEI (193 aa). Residue 355 to 362 coordinates ATP; sequence GPPGVGKT. A Lon proteolytic domain is found at 591–772; the sequence is SNRIGQVTGL…DEVLKVALER (182 aa). Residues Ser678 and Lys721 contribute to the active site.

It belongs to the peptidase S16 family. Homohexamer. Organized in a ring with a central cavity.

It localises to the cytoplasm. The catalysed reaction is Hydrolysis of proteins in presence of ATP.. Its function is as follows. ATP-dependent serine protease that mediates the selective degradation of mutant and abnormal proteins as well as certain short-lived regulatory proteins. Required for cellular homeostasis and for survival from DNA damage and developmental changes induced by stress. Degrades polypeptides processively to yield small peptide fragments that are 5 to 10 amino acids long. Binds to DNA in a double-stranded, site-specific manner. Regulates swarmer cell differentiation of V.parahaemolyticus. In Vibrio parahaemolyticus serotype O3:K6 (strain RIMD 2210633), this protein is Lon protease.